A 350-amino-acid chain; its full sequence is Biotin synthase (350 aa).

Residues 41–268 (NEVQISRLLS…KSRVRLSAGR (228 aa)) form the Radical SAM core domain. Positions 56, 60, and 63 each coordinate [4Fe-4S] cluster. [2Fe-2S] cluster is bound by residues Cys-100, Cys-131, Cys-191, and Arg-263.

Belongs to the radical SAM superfamily. Biotin synthase family. As to quaternary structure, homodimer. Requires [4Fe-4S] cluster as cofactor. It depends on [2Fe-2S] cluster as a cofactor.

It catalyses the reaction (4R,5S)-dethiobiotin + (sulfur carrier)-SH + 2 reduced [2Fe-2S]-[ferredoxin] + 2 S-adenosyl-L-methionine = (sulfur carrier)-H + biotin + 2 5'-deoxyadenosine + 2 L-methionine + 2 oxidized [2Fe-2S]-[ferredoxin]. It participates in cofactor biosynthesis; biotin biosynthesis; biotin from 7,8-diaminononanoate: step 2/2. Catalyzes the conversion of dethiobiotin (DTB) to biotin by the insertion of a sulfur atom into dethiobiotin via a radical-based mechanism. The protein is Biotin synthase of Shewanella frigidimarina (strain NCIMB 400).